Reading from the N-terminus, the 371-residue chain is 4-hydroxyphenylpyruvate dioxygenase-like protein (371 aa).

2 consecutive VOC domains span residues Arg-7–Arg-135 and His-160–Lys-328. Residues His-163, His-258, and Glu-339 each contribute to the Fe cation site.

It belongs to the 4HPPD family. The cofactor is Fe cation.

Its subcellular location is the mitochondrion. The catalysed reaction is 3-(4-hydroxyphenyl)pyruvate + O2 = (S)-4-hydroxymandelate + CO2. Functionally, iron-dependent dioxygenase that catalyzes the conversion of 4-hydroxyphenylpyruvate (4-HPPA) to 4-hydroxymandelate (4-HMA) in the mitochondria, one of the steps in the biosynthesis of coenzyme Q10 from tyrosine. The protein is 4-hydroxyphenylpyruvate dioxygenase-like protein of Mus musculus (Mouse).